A 439-amino-acid chain; its full sequence is Trigger factor (439 aa).

Positions 175–260 (SDKLVIDYQN…VKSVYVMKGM (86 aa)) constitute a PPIase FKBP-type domain.

The protein belongs to the FKBP-type PPIase family. Tig subfamily.

The protein resides in the cytoplasm. The catalysed reaction is [protein]-peptidylproline (omega=180) = [protein]-peptidylproline (omega=0). In terms of biological role, involved in protein export. Acts as a chaperone by maintaining the newly synthesized protein in an open conformation. Functions as a peptidyl-prolyl cis-trans isomerase. The chain is Trigger factor from Ehrlichia chaffeensis (strain ATCC CRL-10679 / Arkansas).